Here is a 126-residue protein sequence, read N- to C-terminus: Actin-depolymerizing factor (126 aa).

One can recognise an ADF-H domain in the interval glutamate 1–leucine 126.

It belongs to the actin-binding proteins ADF family. As to expression, preferentially in mature anther.

Its function is as follows. Actin-depolymerizing protein. Severs actin filaments (F-actin) and binds to actin monomers. The chain is Actin-depolymerizing factor from Brassica napus (Rape).